A 410-amino-acid chain; its full sequence is Argininosuccinate synthase (410 aa).

ATP-binding positions include 13–21 (AYSGGLDTS) and Ala40. L-citrulline-binding residues include Tyr91 and Ser96. Gly121 is a binding site for ATP. Residues Thr123, Asn127, and Asp128 each contribute to the L-aspartate site. An L-citrulline-binding site is contributed by Asn127. The L-citrulline site is built by Arg131, Ser182, Ser191, Glu267, and Tyr279.

It belongs to the argininosuccinate synthase family. Type 1 subfamily. As to quaternary structure, homotetramer.

It is found in the cytoplasm. The catalysed reaction is L-citrulline + L-aspartate + ATP = 2-(N(omega)-L-arginino)succinate + AMP + diphosphate + H(+). The protein operates within amino-acid biosynthesis; L-arginine biosynthesis; L-arginine from L-ornithine and carbamoyl phosphate: step 2/3. This Gluconobacter oxydans (strain 621H) (Gluconobacter suboxydans) protein is Argininosuccinate synthase.